The primary structure comprises 469 residues: ATP-dependent protease ATPase subunit HslU (469 aa).

ATP-binding positions include Ile-21, 63–68, Asp-282, Glu-347, and Arg-419; that span reads GVGKTE.

It belongs to the ClpX chaperone family. HslU subfamily. A double ring-shaped homohexamer of HslV is capped on each side by a ring-shaped HslU homohexamer. The assembly of the HslU/HslV complex is dependent on binding of ATP.

It is found in the cytoplasm. ATPase subunit of a proteasome-like degradation complex; this subunit has chaperone activity. The binding of ATP and its subsequent hydrolysis by HslU are essential for unfolding of protein substrates subsequently hydrolyzed by HslV. HslU recognizes the N-terminal part of its protein substrates and unfolds these before they are guided to HslV for hydrolysis. This is ATP-dependent protease ATPase subunit HslU from Petrotoga mobilis (strain DSM 10674 / SJ95).